Reading from the N-terminus, the 434-residue chain is E3 ubiquitin-protein ligase siah-1 (434 aa).

The tract at residues 27 to 88 is disordered; that stretch reads FEEDENAGPE…NGNTPSVTIP (62 aa). The segment covering 43–55 has biased composition (low complexity); the sequence is SSSSASSQRSSAS. The segment covering 74–88 has biased composition (polar residues); sequence MSNNQNGNTPSVTIP. Residues 171 to 206 form an RING-type; degenerate zinc finger; that stretch reads CPVCLEYMLPPYMQCPSGHLVCSNCRPKLQCCPTCR. Positions 220–415 are SBD; it reads IANTVRFPCK…LGINVTISRI (196 aa). Residues 223-283 form an SIAH-type; degenerate zinc finger; the sequence is TVRFPCKFSN…VMDHLKKVHK (61 aa). The Zn(2+) site is built by cysteine 228, cysteine 235, histidine 247, cysteine 251, cysteine 258, cysteine 265, histidine 277, and histidine 282.

It belongs to the SINA (Seven in absentia) family. In terms of assembly, interacts with tir-1.

The enzyme catalyses S-ubiquitinyl-[E2 ubiquitin-conjugating enzyme]-L-cysteine + [acceptor protein]-L-lysine = [E2 ubiquitin-conjugating enzyme]-L-cysteine + N(6)-ubiquitinyl-[acceptor protein]-L-lysine.. It participates in protein modification; protein ubiquitination. Functionally, E3 ubiquitin-protein ligase that mediates ubiquitination and subsequent proteasomal degradation of target proteins. E3 ubiquitin ligases accept ubiquitin from an E2 ubiquitin-conjugating enzyme in the form of a thioester and then directly transfers the ubiquitin to targeted substrates. It probably triggers the ubiquitin-mediated degradation of different substrates. The chain is E3 ubiquitin-protein ligase siah-1 from Caenorhabditis briggsae.